A 25-amino-acid polypeptide reads, in one-letter code: Histone H1.1 (25 aa).

Residues 1–25 enclose the H15 domain; the sequence is MVSEAIAALKEREGSSEFAIGKKKE. Residues 1–25 are disordered; that stretch reads MVSEAIAALKEREGSSEFAIGKKKE. A compositionally biased stretch (basic and acidic residues) spans 9–25; it reads LKEREGSSEFAIGKKKE.

Its subcellular location is the nucleus. The protein localises to the chromosome. Histones H1 are necessary for the condensation of nucleosome chains into higher-order structures. This chain is Histone H1.1, found in Triticum aestivum (Wheat).